Reading from the N-terminus, the 613-residue chain is Tetratricopeptide repeat protein 39A (613 aa).

3 TPR repeats span residues 315–348, 505–538, and 546–579; these read AIFLFFAGRIEVIKGNIDAAIRRFEECCEAQQHW, CLVKLLKGLCLKYLGRVQEAEENFRSISANEKKI, and PNALLELALLLMEQDRNEEAIKLLESAKQNYKNY.

The protein belongs to the TTC39 family.

The chain is Tetratricopeptide repeat protein 39A (TTC39A) from Homo sapiens (Human).